We begin with the raw amino-acid sequence, 317 residues long: Cyclin-dependent kinase 1 (317 aa).

Residues 7-292 form the Protein kinase domain; it reads YQRQEKVGEG…AKRALIHPYF (286 aa). Residues 13 to 21 and K37 contribute to the ATP site; that span reads VGEGTYGVV. Phosphothreonine is present on T17. At Y18 the chain carries Phosphotyrosine; by SWE1. D133 functions as the Proton acceptor in the catalytic mechanism. T166 is modified (phosphothreonine; by CAK). The disordered stretch occupies residues 296-317; sequence DDRDHNNYNEDNIGIDKHQNMQ.

This sequence belongs to the protein kinase superfamily. CMGC Ser/Thr protein kinase family. CDC2/CDKX subfamily. In terms of assembly, forms several complexes with cyclins CCN1, CLB2, CLN3, and HGC1. The CDC28-CCN1 complex associates with septin CDC11 upon hyphal induction. Interacts with IQG1, RFA2, and HSP90. In terms of processing, phosphorylated at Tyr-18 by SWE1 in a cell cycle-dependent manner. Yeast-form and hyphal cells display similar dynamics of phosphorylation and dephosphorylation of Tyr-18. Tyr-18 phosphorylation leads to inhibition of CDC28 kinase activity.

The enzyme catalyses L-seryl-[protein] + ATP = O-phospho-L-seryl-[protein] + ADP + H(+). It catalyses the reaction L-threonyl-[protein] + ATP = O-phospho-L-threonyl-[protein] + ADP + H(+). Phosphorylation at Thr-17 or Tyr-18 inactivates the enzyme, while phosphorylation at Thr-166 activates it. Functionally, cyclin-dependent kinase that acts as a master regulator of the mitotic and meiotic cell cycles. May drive the G1-S transition. Plays a role in mitotic exit. Plays a role in the expression of morphology-related transcription factors, and especially hyphae-specific genes. Binds distinct cyclin subunits as cells progress through the division cycle or flamentous growth. The CDC28-CLB2 complex regulates cytokinesis partly by phosphorylating the actomyosin ring component IQG1. The CDC28-CLN3 complex phosphorylates SLA1 which regulates cortical actin patch dynamics. The CDC28-CCN1 complex phosphorylates CDC11 and SEC2 upon induction of filamentous growth. The CDC28-HGC1 complex also phosphorylates SEC2 and maintains CDC11 phosphorylation throughout hyphal growth. Moreover, the CDC28-HGC1 complex phosphorylates and prevents RGA2 from localizing to hyphal tips, leading to localized CDC42 activation for hyphal extension. CDC28-HGC1 phosphorylation of EFG1 represses cell separation genes during hyphal growth. Additional substrates for CDC28 are RFA2 in G1-phase; MOB2, which is required for the maintenance of polarisome components and for inhibition of cell separation in hyphae; and GIN4 to regulate its association to SEP7 and subsequent septin ring assembly. The chain is Cyclin-dependent kinase 1 from Candida albicans (strain SC5314 / ATCC MYA-2876) (Yeast).